The primary structure comprises 790 residues: Sorting nexin mvp1 (790 aa).

Polar residues-rich tracts occupy residues 1–10 (MSLFGSSPPN) and 20–40 (KTANSSRSTLFDNEAPTTRSG). Disordered regions lie at residues 1–62 (MSLF…RKQR), 215–342 (PNLS…SIHN), and 373–406 (AITGPFGDSGGPGQSVSGSVGGSNPNRSIGHVRS). Positions 225–240 (PQRPVTPPKAPTPSPP) are enriched in pro residues. Over residues 241-252 (KQQQQQQHQPPT) the composition is skewed to low complexity. Residues 269 to 283 (DLHKGHNHGPLEHST) show a composition bias toward basic and acidic residues. Residues 297–319 (NDLNGNDAVSYSTSPEVTTTSSA) show a composition bias toward polar residues. Composition is skewed to low complexity over residues 324-339 (TTSTFTTSQPPSGPSS) and 386-400 (QSVSGSVGGSNPNRS). Positions 411 to 525 (EENILVTLMP…IMFLTVPTEL (115 aa)) constitute a PX domain. 4 residues coordinate a 1,2-diacyl-sn-glycero-3-phospho-(1D-myo-inositol-3-phosphate): Arg-447, Ser-449, Lys-473, and Arg-492.

This sequence belongs to the sorting nexin family.

The protein resides in the cytoplasm. Its subcellular location is the membrane. In terms of biological role, required for vacuolar protein sorting. The protein is Sorting nexin mvp1 (vsp-1) of Neurospora crassa (strain ATCC 24698 / 74-OR23-1A / CBS 708.71 / DSM 1257 / FGSC 987).